The primary structure comprises 430 residues: Enolase (430 aa).

Gln166 is a binding site for (2R)-2-phosphoglycerate. The Proton donor role is filled by Glu208. The Mg(2+) site is built by Asp245, Glu288, and Asp315. Lys340, Arg369, Ser370, and Lys391 together coordinate (2R)-2-phosphoglycerate. The Proton acceptor role is filled by Lys340.

It belongs to the enolase family. Mg(2+) serves as cofactor.

Its subcellular location is the cytoplasm. The protein resides in the secreted. It localises to the cell surface. It carries out the reaction (2R)-2-phosphoglycerate = phosphoenolpyruvate + H2O. It participates in carbohydrate degradation; glycolysis; pyruvate from D-glyceraldehyde 3-phosphate: step 4/5. Functionally, catalyzes the reversible conversion of 2-phosphoglycerate (2-PG) into phosphoenolpyruvate (PEP). It is essential for the degradation of carbohydrates via glycolysis. This is Enolase from Clostridium beijerinckii (strain ATCC 51743 / NCIMB 8052) (Clostridium acetobutylicum).